We begin with the raw amino-acid sequence, 544 residues long: Chaperonin GroEL 4 (544 aa).

ATP is bound by residues 30–33, Lys51, 87–91, Gly415, and Asp496; these read TLGP and DGTTT.

The protein belongs to the chaperonin (HSP60) family. Forms a cylinder of 14 subunits composed of two heptameric rings stacked back-to-back. Interacts with the co-chaperonin GroES.

The protein resides in the cytoplasm. It carries out the reaction ATP + H2O + a folded polypeptide = ADP + phosphate + an unfolded polypeptide.. Together with its co-chaperonin GroES, plays an essential role in assisting protein folding. The GroEL-GroES system forms a nano-cage that allows encapsulation of the non-native substrate proteins and provides a physical environment optimized to promote and accelerate protein folding. The sequence is that of Chaperonin GroEL 4 from Sinorhizobium medicae (strain WSM419) (Ensifer medicae).